A 96-amino-acid polypeptide reads, in one-letter code: UPF0251 protein Shal_3723 (96 aa).

The protein belongs to the UPF0251 family.

In Shewanella halifaxensis (strain HAW-EB4), this protein is UPF0251 protein Shal_3723.